The primary structure comprises 239 residues: Probable 2-phosphosulfolactate phosphatase (239 aa).

Belongs to the ComB family. Mg(2+) serves as cofactor.

The catalysed reaction is (2R)-O-phospho-3-sulfolactate + H2O = (2R)-3-sulfolactate + phosphate. This chain is Probable 2-phosphosulfolactate phosphatase, found in Clostridium botulinum (strain Kyoto / Type A2).